Here is a 1139-residue protein sequence, read N- to C-terminus: Ras GTPase-activating protein nGAP (1139 aa).

Residues 1 to 87 form a disordered region; sequence MQTPEVPAER…SRGLPKLKES (87 aa). The residue at position 16 (serine 16) is a Phosphoserine. The segment covering 17–36 has biased composition (polar residues); it reads ISGTSTSEKPNSMDTANTSP. A PH domain is found at 41–158; sequence GFFSKRLKGS…WMENLRRTVQ (118 aa). The span at 45–56 shows a compositional bias: basic residues; it reads KRLKGSIKRTKS. Residues 73–87 are compositionally biased toward basic and acidic residues; it reads STDDRSRGLPKLKES. A Phosphoserine modification is found at serine 89. One can recognise a C2 domain in the interval 149 to 267; the sequence is WMENLRRTVQ…TGRQFVEKWY (119 aa). The region spanning 343–551 is the Ras-GAP domain; sequence GRAKDFLTDL…GGMKRFLLEI (209 aa). Threonine 620 carries the phosphothreonine modification. Position 663 is a phosphoserine (serine 663). Disordered stretches follow at residues 684 to 704, 751 to 782, 803 to 869, 910 to 953, and 1116 to 1139; these read ASSQSMTYSEKDERESSLPNG, ETQSTPQSAPQVRRPLHPALNQPGGLQPLSFQ, SLEN…GQAQ, EPVQ…SATM, and NGISPTNPTKLSITENGEFKNSSC. Composition is skewed to polar residues over residues 751 to 760 and 803 to 818; these read ETQSTPQSAP and SLENLSTASSRSQSNS. Residues 833-855 show a composition bias toward basic and acidic residues; sequence DFTKRSTQSEDFSRRHTVPDRHI. A Phosphoserine modification is found at serine 864. Residues 916 to 928 are compositionally biased toward low complexity; it reads SRSRQQSSSSRES.

Interacts with PEAK1.

Inhibitory regulator of the Ras-cyclic AMP pathway. The polypeptide is Ras GTPase-activating protein nGAP (RASAL2) (Homo sapiens (Human)).